The following is a 174-amino-acid chain: Adenine phosphoribosyltransferase (174 aa).

It belongs to the purine/pyrimidine phosphoribosyltransferase family. As to quaternary structure, homodimer.

Its subcellular location is the cytoplasm. It carries out the reaction AMP + diphosphate = 5-phospho-alpha-D-ribose 1-diphosphate + adenine. The protein operates within purine metabolism; AMP biosynthesis via salvage pathway; AMP from adenine: step 1/1. In terms of biological role, catalyzes a salvage reaction resulting in the formation of AMP, that is energically less costly than de novo synthesis. The sequence is that of Adenine phosphoribosyltransferase from Nitrosomonas europaea (strain ATCC 19718 / CIP 103999 / KCTC 2705 / NBRC 14298).